A 518-amino-acid polypeptide reads, in one-letter code: Sensor protein kinase HptS (518 aa).

Transmembrane regions (helical) follow at residues 20-40 (IFPVFLVIIIGLVSFYAIYIW) and 222-242 (GITLLIVMAVVLVLLVIFGFI). The Histidine kinase domain maps to 297-513 (EQLIHSIEHT…LICYKIPLSR (217 aa)). His-325 carries the post-translational modification Phosphohistidine; by autocatalysis.

Post-translationally, autophosphorylated.

Its subcellular location is the cell membrane. It catalyses the reaction ATP + protein L-histidine = ADP + protein N-phospho-L-histidine.. Functionally, member of the two-component regulatory system HptS/HptR that regulates genes involved in hexose phosphate transport system in response to changes in extracellular phosphate sources. May act as a sensor protein kinase which is autophosphorylated at a histidine residue and transfers its phosphate group to the conserved aspartic acid residue in the regulatory domain of HptS. In turn, HptS antagonizes CcpA-dependent transcription of a subset of CcpA-regulated genes involved in antibiotic susceptibility. This Staphylococcus aureus (strain bovine RF122 / ET3-1) protein is Sensor protein kinase HptS (hptS).